Reading from the N-terminus, the 182-residue chain is Ribosome maturation factor RimM (182 aa).

The PRC barrel domain occupies 103-182 (EDEFYWRELF…RIEVDWDPGF (80 aa)).

Belongs to the RimM family. As to quaternary structure, binds ribosomal protein uS19.

It is found in the cytoplasm. In terms of biological role, an accessory protein needed during the final step in the assembly of 30S ribosomal subunit, possibly for assembly of the head region. Essential for efficient processing of 16S rRNA. May be needed both before and after RbfA during the maturation of 16S rRNA. It has affinity for free ribosomal 30S subunits but not for 70S ribosomes. The chain is Ribosome maturation factor RimM from Vibrio vulnificus (strain CMCP6).